Reading from the N-terminus, the 341-residue chain is S-adenosylmethionine:tRNA ribosyltransferase-isomerase (341 aa).

It belongs to the QueA family. As to quaternary structure, monomer.

It is found in the cytoplasm. It catalyses the reaction 7-aminomethyl-7-carbaguanosine(34) in tRNA + S-adenosyl-L-methionine = epoxyqueuosine(34) in tRNA + adenine + L-methionine + 2 H(+). It participates in tRNA modification; tRNA-queuosine biosynthesis. In terms of biological role, transfers and isomerizes the ribose moiety from AdoMet to the 7-aminomethyl group of 7-deazaguanine (preQ1-tRNA) to give epoxyqueuosine (oQ-tRNA). In Chlorobium phaeovibrioides (strain DSM 265 / 1930) (Prosthecochloris vibrioformis (strain DSM 265)), this protein is S-adenosylmethionine:tRNA ribosyltransferase-isomerase.